Reading from the N-terminus, the 503-residue chain is MEEFQGYLELYRSQQHDFLYPLIFREYIYALAHDRGLNRSVLLDNVGYDKKSSLLIIKRLISRMYQQNHFLISVNDSNQNKFFGYNKNLYSQIISEGFAVIVEIPFSLRLVSSLKETETVKSYNLRSIHSIFPFFEDKFPHLNYASDVLIPYPIHLEILVQTLRYCVKDPPSLHLLRLFLHEYYNWNTLITPKKSIFAKSNQRLFLLLYNSYVCEYESILLFLRNQSNHLRLTSSGILFERIRFYEKIKYPVEEVFANDFPATLWFFKDPFIQYVRYQGKSILASKDTPLLMNKWKYYLVHFWQCHFYVWSQPGRIHINQLSKHSFDFLGYLSSIRPNISVVRSQLLENSFLMDNAMKKLDTLFPIIPMIGSLAKVKFCNTSGHPISKSSWADSSDSDIIDRFVRIGGNLSHYYSGSSKKKSLYRIKYILRLSCVKTLARKHKSTVRTFLKRLGPKLLDEFFTEEEQIFSLLFPRTSSTLKRFYRGRIWYLDILCINDLVNHE.

Belongs to the intron maturase 2 family. MatK subfamily.

The protein localises to the plastid. The protein resides in the chloroplast. Its function is as follows. Usually encoded in the trnK tRNA gene intron. Probably assists in splicing its own and other chloroplast group II introns. This is Maturase K from Rosa carolina (Pasture rose).